The chain runs to 432 residues: Hexuronate transporter (432 aa).

The N-terminal stretch at 1–31 is a signal peptide; sequence MRKIKGLRWYMIALVTLGTVLGYLTRNTVAA. The Periplasmic portion of the chain corresponds to 33-48; the sequence is APTLMEELNISTQQYS. Residues 49 to 69 form a helical membrane-spanning segment; the sequence is YIIAAYSAAYTVMQPVAGYVL. The Cytoplasmic portion of the chain corresponds to 70 to 75; the sequence is DVLGTK. The helical transmembrane segment at 76 to 96 threads the bilayer; that stretch reads IGYAMFAVLWAVFCGATALAG. Residues 97-99 are Periplasmic-facing; it reads SWG. The chain crosses the membrane as a helical span at residues 100–120; the sequence is GLAVARGAVGAAEAAMIPAGL. Residues 121 to 138 lie on the Cytoplasmic side of the membrane; sequence KASSEWFPAKERSIAVGY. The chain crosses the membrane as a helical span at residues 139–159; it reads FNVGSSIGAMIAPPLVVWAIV. Residues 160–164 are Periplasmic-facing; sequence MHSWQ. A helical membrane pass occupies residues 165–185; the sequence is MAFIISGALSFIWAMAWLIFY. The Cytoplasmic portion of the chain corresponds to 186 to 236; that stretch reads KHPRDQKHLTDEERDYIINGQEAQHQVSTAKKMSVGQILRNRQFWGIALPR. Residues 237 to 257 form a helical membrane-spanning segment; that stretch reads FLAEPAWGTFNAWIPLFMFKV. At 258 to 264 the chain is on the periplasmic side; sequence YGFNLKE. A helical transmembrane segment spans residues 265–285; sequence IAMFAWMPMLFADLGCILGGY. Topologically, residues 286-293 are cytoplasmic; the sequence is LPPLFQRW. A helical membrane pass occupies residues 294 to 314; sequence FGVNLIVSRKMVVTLGAVLMI. Residues 315 to 317 lie on the Periplasmic side of the membrane; sequence GPG. Residues 318–338 traverse the membrane as a helical segment; the sequence is MIGLFTNPYVAIMLLCIGGFA. At 339-369 the chain is on the cytoplasmic side; sequence HQALSGALITLSSDVFGRNEVATANGLTGMS. Residues 370–390 form a helical membrane-spanning segment; it reads AWLASTLFALVVGALADTIGF. Position 391 (S391) is a topological domain, periplasmic. The helical transmembrane segment at 392–412 threads the bilayer; the sequence is PLFAVLAVFDLLGALVIWTVL. The Cytoplasmic portion of the chain corresponds to 413 to 432; that stretch reads QNKPAIEVAQETHNDPAPQH.

Belongs to the major facilitator superfamily. Phthalate permease family.

The protein resides in the cell inner membrane. The catalysed reaction is aldehydo-D-glucuronate(in) + H(+)(in) = aldehydo-D-glucuronate(out) + H(+)(out). It catalyses the reaction aldehydo-D-galacturonate(out) + H(+)(out) = aldehydo-D-galacturonate(in) + H(+)(in). In terms of biological role, transport of aldohexuronates such as D-glucuronate and D-galacturonate. The chain is Hexuronate transporter (exuT) from Escherichia coli O157:H7.